Here is a 343-residue protein sequence, read N- to C-terminus: Holliday junction branch migration complex subunit RuvB (343 aa).

A large ATPase domain (RuvB-L) region spans residues 1–182; that stretch reads MTDPIPLHTP…FGIPVRLNFY (182 aa). Leu-21, Arg-22, Gly-63, Lys-66, Thr-67, Thr-68, Arg-172, Tyr-182, and Arg-219 together coordinate ATP. Thr-67 is a binding site for Mg(2+). Residues 183 to 253 form a small ATPAse domain (RuvB-S) region; that stretch reads TEEELEKVVT…IADAALTRLE (71 aa). Residues 256–343 form a head domain (RuvB-H) region; that stretch reads GLGLDAMDRR…SQTGLFDGKS (88 aa). Residues Arg-292, Arg-311, and Arg-316 each coordinate DNA.

The protein belongs to the RuvB family. In terms of assembly, homohexamer. Forms an RuvA(8)-RuvB(12)-Holliday junction (HJ) complex. HJ DNA is sandwiched between 2 RuvA tetramers; dsDNA enters through RuvA and exits via RuvB. An RuvB hexamer assembles on each DNA strand where it exits the tetramer. Each RuvB hexamer is contacted by two RuvA subunits (via domain III) on 2 adjacent RuvB subunits; this complex drives branch migration. In the full resolvosome a probable DNA-RuvA(4)-RuvB(12)-RuvC(2) complex forms which resolves the HJ.

The protein localises to the cytoplasm. The enzyme catalyses ATP + H2O = ADP + phosphate + H(+). The RuvA-RuvB-RuvC complex processes Holliday junction (HJ) DNA during genetic recombination and DNA repair, while the RuvA-RuvB complex plays an important role in the rescue of blocked DNA replication forks via replication fork reversal (RFR). RuvA specifically binds to HJ cruciform DNA, conferring on it an open structure. The RuvB hexamer acts as an ATP-dependent pump, pulling dsDNA into and through the RuvAB complex. RuvB forms 2 homohexamers on either side of HJ DNA bound by 1 or 2 RuvA tetramers; 4 subunits per hexamer contact DNA at a time. Coordinated motions by a converter formed by DNA-disengaged RuvB subunits stimulates ATP hydrolysis and nucleotide exchange. Immobilization of the converter enables RuvB to convert the ATP-contained energy into a lever motion, pulling 2 nucleotides of DNA out of the RuvA tetramer per ATP hydrolyzed, thus driving DNA branch migration. The RuvB motors rotate together with the DNA substrate, which together with the progressing nucleotide cycle form the mechanistic basis for DNA recombination by continuous HJ branch migration. Branch migration allows RuvC to scan DNA until it finds its consensus sequence, where it cleaves and resolves cruciform DNA. This Erythrobacter litoralis (strain HTCC2594) protein is Holliday junction branch migration complex subunit RuvB.